The chain runs to 181 residues: MAADANNLIWIDLEMTGLEPDVDRVIEIATLVTDQELNIIGQGPVIAIHQSDEVLAAMDDWNQKHHGESGLIDRVRASQVNEAQAVAQTIAFLEQYVPKGASPMCGNSVGQDRRFLNRYMRELEDYFHYRNLDVSTVKELVKRWSPETMAGFKKQNTHQALQDIQESIAELQYYRSKVFKI.

One can recognise an Exonuclease domain in the interval 8-171; the sequence is LIWIDLEMTG…QDIQESIAEL (164 aa). Residue Y129 is part of the active site.

It belongs to the oligoribonuclease family.

It is found in the cytoplasm. Its function is as follows. 3'-to-5' exoribonuclease specific for small oligoribonucleotides. The polypeptide is Oligoribonuclease (Shewanella sp. (strain MR-4)).